Reading from the N-terminus, the 612-residue chain is MFNLEEELKKLPAKPGVYIMHDKWDNIIYIGKAKVLKNRVRQYFQSNRNKSAKIVQMVSHIQYFEYIITDSELEALVLECNLIKEHRPKYNTMLKDDKSYPFIKITVGEEYPRVLFARKMKHGAGKYFGPYTSAAAVKDTIELLCKLYKVRTCNRNLPKDEGRDRPCLNYHIGQCDAPCQGYVSGEEYRRRIDEVVAFLNGDYKKIMDRLTTQMQEASEKMEYEEAARYRDLLMSVKQVAQKQKITADDVNDRDVIACASDGQDAVVQVFFIRQGKLLGRDHFHMKVAEGDSKSDIISEFMKQYYGGTPFIPNIIMVQYEIEDADTIAQWLSARKSRKVSIVTPKKGDKEKMVELAYKNAQLVLTQDAEKIKREESRTTGAMKEIAGWLGLGTLHRAEAYDISNTNGVESVGSMVVFEDGKPKKNDYRKFRIRTVKGPDDYKSMREVLTRRFTRGMREREGLEDSHGFSRYPDLIMMDGGRGQVNIALDVLKELGLNIPVCGMVKDDTHSTRGLYYNNIEIPIDKHSEGFKLITRVQDEAHRFAITYHRSLRDKAQVSSVLDSIEGIGPVRRKALMKHFLDIEKIRQASVDELMKADGITENVAENIYKFFH.

One can recognise a GIY-YIG domain in the interval 13 to 92 (AKPGVYIMHD…IKEHRPKYNT (80 aa)). Residues 204-239 (KKIMDRLTTQMQEASEKMEYEEAARYRDLLMSVKQV) form the UVR domain.

This sequence belongs to the UvrC family. In terms of assembly, interacts with UvrB in an incision complex.

Its subcellular location is the cytoplasm. The UvrABC repair system catalyzes the recognition and processing of DNA lesions. UvrC both incises the 5' and 3' sides of the lesion. The N-terminal half is responsible for the 3' incision and the C-terminal half is responsible for the 5' incision. The protein is UvrABC system protein C of Lachnospira eligens (strain ATCC 27750 / DSM 3376 / VPI C15-48 / C15-B4) (Eubacterium eligens).